Reading from the N-terminus, the 86-residue chain is Small ribosomal subunit protein uS17 (86 aa).

The protein belongs to the universal ribosomal protein uS17 family. As to quaternary structure, part of the 30S ribosomal subunit.

Functionally, one of the primary rRNA binding proteins, it binds specifically to the 5'-end of 16S ribosomal RNA. This chain is Small ribosomal subunit protein uS17, found in Roseiflexus castenholzii (strain DSM 13941 / HLO8).